The sequence spans 206 residues: LexA repressor (206 aa).

A DNA-binding region (H-T-H motif) is located at residues 28 to 48; the sequence is RAEIARELGFRSANAAEEHLK. Catalysis depends on for autocatalytic cleavage activity residues S123 and K160.

This sequence belongs to the peptidase S24 family. As to quaternary structure, homodimer.

The catalysed reaction is Hydrolysis of Ala-|-Gly bond in repressor LexA.. Its function is as follows. Represses a number of genes involved in the response to DNA damage (SOS response), including recA and lexA. In the presence of single-stranded DNA, RecA interacts with LexA causing an autocatalytic cleavage which disrupts the DNA-binding part of LexA, leading to derepression of the SOS regulon and eventually DNA repair. In Vibrio parahaemolyticus serotype O3:K6 (strain RIMD 2210633), this protein is LexA repressor.